The following is a 157-amino-acid chain: 6,7-dimethyl-8-ribityllumazine synthase 1 (157 aa).

5-amino-6-(D-ribitylamino)uracil contacts are provided by residues Phe-22, 53–55 (ALE), and 82–84 (TVI). 87-88 (ET) is a (2S)-2-hydroxy-3-oxobutyl phosphate binding site. Residue His-90 is the Proton donor of the active site. Asn-115 is a binding site for 5-amino-6-(D-ribitylamino)uracil. His-129 contributes to the (2S)-2-hydroxy-3-oxobutyl phosphate binding site.

This sequence belongs to the DMRL synthase family. As to quaternary structure, homopentamer.

It catalyses the reaction (2S)-2-hydroxy-3-oxobutyl phosphate + 5-amino-6-(D-ribitylamino)uracil = 6,7-dimethyl-8-(1-D-ribityl)lumazine + phosphate + 2 H2O + H(+). It participates in cofactor biosynthesis; riboflavin biosynthesis; riboflavin from 2-hydroxy-3-oxobutyl phosphate and 5-amino-6-(D-ribitylamino)uracil: step 1/2. Its function is as follows. Catalyzes the formation of 6,7-dimethyl-8-ribityllumazine by condensation of 5-amino-6-(D-ribitylamino)uracil with 3,4-dihydroxy-2-butanone 4-phosphate. This is the penultimate step in the biosynthesis of riboflavin. In Brucella abortus (strain 2308), this protein is 6,7-dimethyl-8-ribityllumazine synthase 1 (ribH1).